The following is a 147-amino-acid chain: Hemoglobin subunit epsilon (147 aa).

The 145-residue stretch at 3-147 folds into the Globin domain; it reads HFTAEEKATV…VANALAHKYH (145 aa). Phosphoserine occurs at positions 14 and 51. Residues His-64 and His-93 each contribute to the heme b site.

It belongs to the globin family. Heterotetramer of two alpha chains and two epsilon chains in early embryonic hemoglobin Gower-2; two zeta chains and two epsilon chains in early embryonic hemoglobin Gower-1. As to expression, red blood cells.

In terms of biological role, the epsilon chain is a beta-type chain of early mammalian embryonic hemoglobin. This chain is Hemoglobin subunit epsilon (HBE1), found in Bradypus tridactylus (Pale-throated three-toed sloth).